The sequence spans 66 residues: Large ribosomal subunit protein bL31 (66 aa).

Residues C16, C18, C36, and C39 each contribute to the Zn(2+) site.

This sequence belongs to the bacterial ribosomal protein bL31 family. Type A subfamily. Part of the 50S ribosomal subunit during exponential growth. Zn(2+) is required as a cofactor.

Binds the 23S rRNA. Functionally, while neither of the L31 paralogs is essential, this protein seems to function as the main L31 protein. Has a lower affinity for 70S ribosomes than the non-zinc-containing paralog L31B (ytiA); is displaced by it to varying extents, even under zinc-replete conditions. This is Large ribosomal subunit protein bL31 (rpmE) from Bacillus subtilis (strain 168).